The chain runs to 209 residues: Kynurenine formamidase (209 aa).

Trp-20 is a binding site for substrate. His-50, His-54, and Asp-56 together coordinate Zn(2+). The active-site Proton donor/acceptor is the His-60. Zn(2+)-binding residues include His-161 and Glu-173.

The protein belongs to the Cyclase 1 superfamily. KynB family. Homodimer. Requires Zn(2+) as cofactor.

It catalyses the reaction N-formyl-L-kynurenine + H2O = L-kynurenine + formate + H(+). It participates in amino-acid degradation; L-tryptophan degradation via kynurenine pathway; L-kynurenine from L-tryptophan: step 2/2. Its function is as follows. Catalyzes the hydrolysis of N-formyl-L-kynurenine to L-kynurenine, the second step in the kynurenine pathway of tryptophan degradation. In Bacillus cereus (strain ATCC 10987 / NRS 248), this protein is Kynurenine formamidase.